Consider the following 502-residue polypeptide: ATP synthase subunit alpha (502 aa).

169–176 (GDRQTGKT) serves as a coordination point for ATP.

It belongs to the ATPase alpha/beta chains family. As to quaternary structure, F-type ATPases have 2 components, CF(1) - the catalytic core - and CF(0) - the membrane proton channel. CF(1) has five subunits: alpha(3), beta(3), gamma(1), delta(1), epsilon(1). CF(0) has three main subunits: a(1), b(2) and c(9-12). The alpha and beta chains form an alternating ring which encloses part of the gamma chain. CF(1) is attached to CF(0) by a central stalk formed by the gamma and epsilon chains, while a peripheral stalk is formed by the delta and b chains.

The protein resides in the cell membrane. The enzyme catalyses ATP + H2O + 4 H(+)(in) = ADP + phosphate + 5 H(+)(out). Produces ATP from ADP in the presence of a proton gradient across the membrane. The alpha chain is a regulatory subunit. This is ATP synthase subunit alpha from Streptococcus pyogenes serotype M12 (strain MGAS9429).